Reading from the N-terminus, the 264-residue chain is Large ribosomal subunit protein mL50 (264 aa).

A mitochondrion-targeting transit peptide spans 1 to 75 (MSSLLKLHCI…EEGTNEASSQ (75 aa)).

The protein belongs to the mitochondrion-specific ribosomal protein mL50 family. Component of the mitochondrial large ribosomal subunit (mt-LSU). Mature yeast 74S mitochondrial ribosomes consist of a small (37S) and a large (54S) subunit. The 37S small subunit contains a 15S ribosomal RNA (15S mt-rRNA) and 34 different proteins. The 54S large subunit contains a 21S rRNA (21S mt-rRNA) and 46 different proteins.

Its subcellular location is the mitochondrion. Its function is as follows. Component of the mitochondrial ribosome (mitoribosome), a dedicated translation machinery responsible for the synthesis of mitochondrial genome-encoded proteins, including at least some of the essential transmembrane subunits of the mitochondrial respiratory chain. The mitoribosomes are attached to the mitochondrial inner membrane and translation products are cotranslationally integrated into the membrane. The sequence is that of Large ribosomal subunit protein mL50 (MRPL13) from Saccharomyces cerevisiae (strain ATCC 204508 / S288c) (Baker's yeast).